The chain runs to 449 residues: Serine--tRNA ligase (449 aa).

L-serine is bound at residue 255–257 (TSE). 286–288 (RSE) is an ATP binding site. An L-serine-binding site is contributed by glutamate 309. Residue 373-376 (EISS) participates in ATP binding. L-serine is bound at residue serine 409.

It belongs to the class-II aminoacyl-tRNA synthetase family. Type-1 seryl-tRNA synthetase subfamily. Homodimer. The tRNA molecule binds across the dimer.

It localises to the cytoplasm. The enzyme catalyses tRNA(Ser) + L-serine + ATP = L-seryl-tRNA(Ser) + AMP + diphosphate + H(+). The catalysed reaction is tRNA(Sec) + L-serine + ATP = L-seryl-tRNA(Sec) + AMP + diphosphate + H(+). It functions in the pathway aminoacyl-tRNA biosynthesis; selenocysteinyl-tRNA(Sec) biosynthesis; L-seryl-tRNA(Sec) from L-serine and tRNA(Sec): step 1/1. In terms of biological role, catalyzes the attachment of serine to tRNA(Ser). Is also able to aminoacylate tRNA(Sec) with serine, to form the misacylated tRNA L-seryl-tRNA(Sec), which will be further converted into selenocysteinyl-tRNA(Sec). This Bordetella avium (strain 197N) protein is Serine--tRNA ligase.